A 454-amino-acid polypeptide reads, in one-letter code: Notoamide E oxidase notB (454 aa).

Residues 15–35 (SPAELTVIIVGLGIAGLTAAI) traverse the membrane as a helical segment. Positions 48 and 61 each coordinate FAD. Asparagine 75 carries N-linked (GlcNAc...) asparagine glycosylation. Position 121 (arginine 121) interacts with FAD. Catalysis depends on residues arginine 199 and tyrosine 229. 2 residues coordinate FAD: aspartate 322 and glycine 335.

Belongs to the paxM FAD-dependent monooxygenase family. The cofactor is FAD.

The protein localises to the membrane. The catalysed reaction is notoamide E + NADPH + O2 + H(+) = notoamide C + NADP(+) + H2O. The enzyme catalyses notoamide E + NADPH + O2 + H(+) = notoamide D + NADP(+) + H2O. Its pathway is alkaloid biosynthesis. Its function is as follows. FAD-dependent monooxygenase; part of the gene cluster that mediates the biosynthesis of notoamide, a fungal indole alkaloid that belongs to a family of natural products containing a characteristic bicyclo[2.2.2]diazaoctane core. The first step of notoamide biosynthesis involves coupling of L-proline and L-tryptophan by the bimodular NRPS notE, to produce cyclo-L-tryptophan-L-proline called brevianamide F. The reverse prenyltransferase notF then acts as a deoxybrevianamide E synthase and converts brevianamide F to deoxybrevianamide E via reverse prenylation at C-2 of the indole ring leading to the bicyclo[2.2.2]diazaoctane core. Deoxybrevianamide E is further hydroxylated at C-6 of the indole ring, likely catalyzed by the cytochrome P450 monooxygenase notG, to yield 6-hydroxy-deoxybrevianamide E. 6-hydroxy-deoxybrevianamide E is a specific substrate of the prenyltransferase notC for normal prenylation at C-7 to produce 6-hydroxy-7-prenyl-deoxybrevianamide, also called notoamide S. As the proposed pivotal branching point in notoamide biosynthesis, notoamide S can be diverted to notoamide E through an oxidative pyran ring closure putatively catalyzed by either notH cytochrome P450 monooxygenase or the notD FAD-linked oxidoreductase. This step would be followed by an indole 2,3-epoxidation-initiated pinacol-like rearrangement catalyzed by the notB FAD-dependent monooxygenase leading to the formation of notoamide C and notoamide D. On the other hand notoamide S is converted to notoamide T by notH (or notD), a bifunctional oxidase that also functions as the intramolecular Diels-Alderase responsible for generation of (+)-notoamide T. To generate antipodal (-)-notoaminide T, notH' (or notD') in Aspergillus versicolor is expected to catalyze a Diels-Alder reaction leading to the opposite stereochemistry. The remaining oxidoreductase notD (or notH) likely catalyzes the oxidative pyran ring formation to yield (+)-stephacidin A. The FAD-dependent monooxygenase notI is highly similar to notB and is predicted to catalyze a similar conversion from (+)-stephacidin A to (-)-notoamide B via the 2,3-epoxidation of (+)-stephacidin A followed by a pinacol-type rearrangement. Finally, it remains unclear which enzyme could be responsible for the final hydroxylation steps leading to notoamide A and sclerotiamide. This Aspergillus sp. (strain MF297-2) protein is Notoamide E oxidase notB.